Here is a 156-residue protein sequence, read N- to C-terminus: Small ribosomal subunit protein uS7 (156 aa).

Belongs to the universal ribosomal protein uS7 family. Part of the 30S ribosomal subunit. Contacts proteins S9 and S11.

Functionally, one of the primary rRNA binding proteins, it binds directly to 16S rRNA where it nucleates assembly of the head domain of the 30S subunit. Is located at the subunit interface close to the decoding center, probably blocks exit of the E-site tRNA. The polypeptide is Small ribosomal subunit protein uS7 (Clostridium botulinum (strain Okra / Type B1)).